The primary structure comprises 235 residues: MSTKFWLVVPAAGVGARMAADRPKQYLQVGGRCIIEHTLDCFLDHPDLLGAVVCLAVDDPYWPQLAVASDPRVRRAPGGRERADSVLAGLDALQAAGAGEQDWVLVHDAARPNLAREDLQRLLAVLADDPVGGLLAVPVRDTLKRADADGRVAQTVDRSQIWQAYTPQMFRLGALSQALRGALAAGVPITDEASALEWCGQSSRLVEGRADNLKITRPEDLAWLRQAWVERDRQR.

The protein belongs to the IspD/TarI cytidylyltransferase family. IspD subfamily.

It carries out the reaction 2-C-methyl-D-erythritol 4-phosphate + CTP + H(+) = 4-CDP-2-C-methyl-D-erythritol + diphosphate. Its pathway is isoprenoid biosynthesis; isopentenyl diphosphate biosynthesis via DXP pathway; isopentenyl diphosphate from 1-deoxy-D-xylulose 5-phosphate: step 2/6. In terms of biological role, catalyzes the formation of 4-diphosphocytidyl-2-C-methyl-D-erythritol from CTP and 2-C-methyl-D-erythritol 4-phosphate (MEP). This Ectopseudomonas mendocina (strain ymp) (Pseudomonas mendocina) protein is 2-C-methyl-D-erythritol 4-phosphate cytidylyltransferase.